The chain runs to 451 residues: MITPVPQHNSLEGTPLEPAISSLWSTAKRIDTRVVRGRITRAVGTLIHAVLPEARIGELCLLQDTRTGLSLEAEVIGLLDNGVLLTPIGGLAGLSSRAEVVSTGRMREVPIGPDLLGRVIDSRCRPLDGKGEVKTTEVRPLHGRAPNPMTRRMVERPFPLGVRALDGLLTCGEGQRIGIYGEPGGGKSTLISQIVKGAAADVVIVALIGERGREVREFVERHLGEEGLRRAIVVVETSDRSATERAQCAPMATALAEYFREQGLRVALLLDSLTRFCRAMREIGLAAGEPPTRRGFPPSVFAALPGLLERAGLGERGSITAFYTVLVEGDGTGDPIAEESRGILDGHIVLSRALAARSHFPAIDVLQSRSRVMDAVVSETHRKAASFFRDLLARYAECEFLINVGEYKQGGDPLTDRAVASIGELKEFLRQSEDEVSDFEETVGWMSRLTS.

184–189 is an ATP binding site; that stretch reads GGGKST.

The protein belongs to the ATPase alpha/beta chains family. T3SS ATPase subfamily. In terms of assembly, the core secretion machinery of the T3SS is composed of approximately 20 different proteins, including cytoplasmic components, a base, an export apparatus and a needle. This subunit is part of the cytosolic complex. Forms homohexamers.

It is found in the cytoplasm. It carries out the reaction ATP + H2O + cellular proteinSide 1 = ADP + phosphate + cellular proteinSide 2.. Its function is as follows. ATPase component of the type III secretion system (T3SS), also called injectisome, which is used to inject bacterial effector proteins into eukaryotic host cells. Acts as a molecular motor to provide the energy that is required for the export of proteins. Required for type III secretion apparatus (T3SA) formation, proper protein secretion, host cell invasion and virulence. May play a critical role in T3SS substrate recognition, disassembly of the effector/chaperone complex and unfolding of the effector in an ATP-dependent manner prior to secretion. This Sinorhizobium fredii (strain NBRC 101917 / NGR234) protein is Type 3 secretion system ATPase.